A 524-amino-acid polypeptide reads, in one-letter code: MSQGSPGDWAPLDPTPGPPASPNPFVHELHLSRLQRVKFCLLGALLAPIRVLLAFIVLFLLWPFAWLQVAGLSEEQLQEPITGWRKTVCHNGVLGLSRLLFFLLGFLRIRVRGQRASRLQAPVLVAAPHSTFFDPIVLLPCDLPKVVSRAENLSVPVIGALLRFNQAILVSRHDPASRRRVVEEVRRRATSGGKWPQVLFFPEGTCSNKKALLKFKPGAFIAGVPVQPVLIRYPNSLDTTSWAWRGPGVLKVLWLTASQPCSIVDVEFLPVYHPSPEESRDPTLYANNVQRVMAQALGIPATECEFVGSLPVIVVGRLKVALEPQLWELGKVLRKAGLSAGYVDAGAEPGRSRMISQEEFARQLQLSDPQTVAGAFGYFQQDTKGLVDFRDVALALAALDGGRSLEELTRLAFELFAEEQAEGPNRLLYKDGFSTILHLLLGSPHPAATALHAELCQAGSSQGLSLCQFQNFSLHDPLYGKLFSTYLRPPHTSRGTSQTPNASSPGNPTALANGTVQAPKQKGD.

Helical transmembrane passes span 40-62 (CLLGALLAPIRVLLAFIVLFLLW) and 87-107 (TVCHNGVLGLSRLLFFLLGFL). Residues 129–134 (HSTFFD) carry the HXXXXD motif motif. N-linked (GlcNAc...) asparagine glycosylation is present at asparagine 152. The disordered stretch occupies residues 489-524 (PPHTSRGTSQTPNASSPGNPTALANGTVQAPKQKGD). A compositionally biased stretch (polar residues) spans 493-518 (SRGTSQTPNASSPGNPTALANGTVQA).

This sequence belongs to the 1-acyl-sn-glycerol-3-phosphate acyltransferase family. In terms of tissue distribution, widely expressed with predominant level in brain.

The protein resides in the endoplasmic reticulum membrane. The enzyme catalyses a 1-acyl-sn-glycero-3-phosphoethanolamine + an acyl-CoA = a 1,2-diacyl-sn-glycero-3-phosphoethanolamine + CoA. The catalysed reaction is a 1-O-(1Z-alkenyl)-sn-glycero-3-phosphoethanolamine + an acyl-CoA = a 1-O-(1Z-alkenyl)-2-acyl-sn-glycero-3-phosphoethanolamine + CoA. It catalyses the reaction a 1-acyl-sn-glycero-3-phosphocholine + an acyl-CoA = a 1,2-diacyl-sn-glycero-3-phosphocholine + CoA. It carries out the reaction a 1-O-alkyl-sn-glycero-3-phosphocholine + acetyl-CoA = a 1-O-alkyl-2-acetyl-sn-glycero-3-phosphocholine + CoA. The enzyme catalyses a 1-acyl-sn-glycero-3-phospho-L-serine + an acyl-CoA = a 1,2-diacyl-sn-glycero-3-phospho-L-serine + CoA. The catalysed reaction is octanoyl-CoA + a 1-acyl-sn-glycero-3-phosphoethanolamine = 1-acyl-2-octanoyl-sn-glycero-3-phosphoethanolamine + CoA. It catalyses the reaction a 1-acyl-sn-glycero-3-phosphoethanolamine + hexadecanoyl-CoA = 1-acyl-2-hexadecanoyl-sn-glycero-3-phosphoethanolamine + CoA. It carries out the reaction a 1-acyl-sn-glycero-3-phosphoethanolamine + octadecanoyl-CoA = 1-acyl-2-octadecanoyl-sn-glycero-3-phosphoethanolamine + CoA. The enzyme catalyses a 1-acyl-sn-glycero-3-phosphoethanolamine + (9Z)-octadecenoyl-CoA = 1-acyl-2-(9Z)-octadecenoyl-sn-glycero-3-phosphoethanolamine + CoA. The catalysed reaction is a 1-acyl-sn-glycero-3-phosphoethanolamine + (5Z,8Z,11Z,14Z)-eicosatetraenoyl-CoA = 1-acyl-2-(5Z,8Z,11Z,14Z)-eicosatetraenoyl-sn-glycero-3-phosphoethanolamine + CoA. It catalyses the reaction a 1-O-(1Z-alkenyl)-sn-glycero-3-phosphoethanolamine + octanoyl-CoA = 1-O-(1Z)-alkenyl-2-octanoyl-sn-glycero-3-phosphoethanolamine + CoA. It carries out the reaction a 1-O-(1Z-alkenyl)-sn-glycero-3-phosphoethanolamine + hexadecanoyl-CoA = 1-O-(1Z)-alkenyl-2-hexadecanoyl-sn-glycero-3-phosphoethanolamine + CoA. The enzyme catalyses a 1-O-(1Z-alkenyl)-sn-glycero-3-phosphoethanolamine + octadecanoyl-CoA = 1-O-(1Z)-alkenyl-2-octadecanoyl-sn-glycero-3-phosphoethanolamine + CoA. The catalysed reaction is a 1-O-(1Z-alkenyl)-sn-glycero-3-phosphoethanolamine + (9Z)-octadecenoyl-CoA = 1-O-(1Z)-alkenyl-2-(9Z)-octadecenoyl-sn-glycero-3-phosphoethanolamine + CoA. It catalyses the reaction a 1-O-(1Z-alkenyl)-sn-glycero-3-phosphoethanolamine + (5Z,8Z,11Z,14Z)-eicosatetraenoyl-CoA = 1-O-(1Z)-alkenyl-2-(5Z,8Z,11Z,14Z)-eicosatetraenoyl-sn-glycero-3-phosphoethanolamine + CoA. It carries out the reaction a 1-acyl-sn-glycero-3-phosphocholine + hexadecanoyl-CoA = 1-acyl-2-hexadecanoyl-sn-glycero-3-phosphocholine + CoA. The enzyme catalyses a 1-acyl-sn-glycero-3-phosphocholine + (9Z)-octadecenoyl-CoA = a 1-acyl-2-(9Z)-octadecenoyl-sn-glycero-3-phosphocholine + CoA. The catalysed reaction is 1-O-hexadecyl-sn-glycero-3-phosphocholine + (9Z)-octadecenoyl-CoA = 1-O-hexadecyl-2-(9Z)-octadecenoyl-sn-glycero-3-phosphocholine + CoA. It catalyses the reaction 1-O-hexadecyl-sn-glycero-3-phosphocholine + (5Z,8Z,11Z,14Z)-eicosatetraenoyl-CoA = 1-O-hexadecyl-2-(5Z,8Z,11Z,14Z)-eicosatetraenoyl-sn-glycero-3-phosphocholine + CoA. It carries out the reaction 1-hexadecanoyl-sn-glycero-3-phospho-L-serine + (9Z)-octadecenoyl-CoA = 1-hexadecanoyl-2-(9Z-octadecenoyl)-sn-glycero-3-phospho-L-serine + CoA. The enzyme catalyses 1-octadecanoyl-sn-glycero-3-phospho-(1'-sn-glycerol) + (9Z)-octadecenoyl-CoA = 1-octadecanoyl-2-(9Z-octadecenoyl)-sn-glycero-3-phospho-(1'-sn-glycerol) + CoA. The catalysed reaction is 1-octadecanoyl-sn-glycero-3-phospho-(1'-sn-glycerol) + (5Z,8Z,11Z,14Z)-eicosatetraenoyl-CoA = 1-octadecanoyl-2-(5Z,8Z,11Z,14Z-eicosatetraenoyl)-sn-glycero-3-phospho-(1'-sn-glycerol) + CoA. It participates in lipid metabolism; phospholipid metabolism. In terms of biological role, displays acyl-CoA-dependent lysophospholipid acyltransferase activity with a subset of lysophospholipids as substrates; converts lysophosphatidylethanolamine to phosphatidylethanolamine, lysophosphatidylcholine to phosphatidycholine, 1-alkenyl-lysophatidylethanolamine to 1-alkenyl-phosphatidylethanolamine, lysophosphatidylglycerol and alkyl-lysophosphatidylcholine to phosphatidylglycerol and alkyl-phosphatidylcholine, respectively. In contrast, has no lysophosphatidylinositol, glycerol-3-phosphate, diacylglycerol or lysophosphatidic acid acyltransferase activity. Prefers long chain acyl-CoAs (C16, C18) as acyl donors. The protein is Lysophospholipid acyltransferase LPCAT4 (LPCAT4) of Homo sapiens (Human).